An 860-amino-acid polypeptide reads, in one-letter code: Ribosome-releasing factor 2, mitochondrial (860 aa).

A tr-type G domain is found at 45–337 (DRTRNIGIIA…AVVNFLPSPL (293 aa)). GTP is bound by residues 54–61 (AHIDAGKT), 118–122 (DTPGH), and 172–175 (NKMD).

The protein belongs to the TRAFAC class translation factor GTPase superfamily. Classic translation factor GTPase family. EF-G/EF-2 subfamily.

It is found in the mitochondrion. Functionally, mitochondrial GTPase that mediates the disassembly of ribosomes from messenger RNA at the termination of mitochondrial protein biosynthesis. Not involved in the GTP-dependent ribosomal translocation step during translation elongation. The protein is Ribosome-releasing factor 2, mitochondrial of Debaryomyces hansenii (strain ATCC 36239 / CBS 767 / BCRC 21394 / JCM 1990 / NBRC 0083 / IGC 2968) (Yeast).